A 380-amino-acid polypeptide reads, in one-letter code: Ribosomal RNA large subunit methyltransferase G (380 aa).

Belongs to the methyltransferase superfamily. RlmG family.

It is found in the cytoplasm. It carries out the reaction guanosine(1835) in 23S rRNA + S-adenosyl-L-methionine = N(2)-methylguanosine(1835) in 23S rRNA + S-adenosyl-L-homocysteine + H(+). Specifically methylates the guanine in position 1835 (m2G1835) of 23S rRNA. The chain is Ribosomal RNA large subunit methyltransferase G from Aeromonas hydrophila subsp. hydrophila (strain ATCC 7966 / DSM 30187 / BCRC 13018 / CCUG 14551 / JCM 1027 / KCTC 2358 / NCIMB 9240 / NCTC 8049).